The following is a 221-amino-acid chain: Chalcone--flavanone isomerase 2 (221 aa).

Substrate-binding residues include threonine 50, asparagine 115, and serine 192.

Belongs to the chalcone isomerase family.

The catalysed reaction is a chalcone = a flavanone.. Its pathway is secondary metabolite biosynthesis; flavonoid biosynthesis. Catalyzes the intramolecular cyclization of bicyclic chalcones into tricyclic (S)-flavanones. Responsible for the isomerization of 4,2',4',6'-tetrahydroxychalcone (also termed chalcone) into naringenin. This Lotus japonicus (Lotus corniculatus var. japonicus) protein is Chalcone--flavanone isomerase 2 (CHI2).